The sequence spans 304 residues: Xylanase inhibitor protein 1 (304 aa).

The signal sequence occupies residues 1-30 (MAPLAARRPACLLALLSVAAALFLTPTALA). Residues 36-304 (GQVTVFWGRN…NYSSLIKYYA (269 aa)) form the GH18 domain. A disulfide bridge links C55 with C96. N119 is a glycosylation site (N-linked (GlcNAc...) asparagine). E158 (proton donor) is an active-site residue. The segment at 178–184 (IRGGPGK) is interaction with fungal GH11 xylanase. C194 and C225 are joined by a disulfide. Residues 262–275 (HPKNVYYGVAPVAQ) form an interaction with fungal GH10 xylanase region. A glycan (N-linked (GlcNAc...) asparagine) is linked at N295.

It belongs to the glycosyl hydrolase 18 family. Xylanase inhibitor subfamily. Binds to fungal GH10 and GH11 xylanases. Also forms a ternary complex with barley alpha-amylase 1 (AMY1) and insoluble starch.

The protein localises to the secreted. Functionally, fungal xylanase inhibitor. Possesses competitive inhibiting activity against fungal endo-1,4-beta-D-xylanases belonging to glycoside hydrolase family 10 (GH10) and family 11 (GH11). Possesses also inhibitory activity towards barley alpha-amylases. Binding to xylanases or amylases is necessary for inhibition activity. May function in plant defense against secreted fungal pathogen xylanases. Is similar to class III chitinases, but does not exhibit chitinase activity. This Triticum aestivum (Wheat) protein is Xylanase inhibitor protein 1.